Consider the following 127-residue polypeptide: Fatty acid-binding protein, liver (127 aa).

Met1 carries the post-translational modification N-acetylmethionine. Phosphoserine is present on Ser11. N6-succinyllysine occurs at positions 31 and 36. Ser39 is subject to Phosphoserine. Lys46 is subject to N6-succinyllysine. Thr51 bears the Phosphothreonine mark. An N6-succinyllysine mark is found at Lys57 and Lys78. Lys84 is modified (N6-acetyllysine; alternate). Residue Lys84 is modified to N6-succinyllysine; alternate. The residue at position 90 (Lys90) is an N6-succinyllysine. Phosphoserine is present on Ser100. An N6-succinyllysine modification is found at Lys121.

It belongs to the calycin superfamily. Fatty-acid binding protein (FABP) family.

Its subcellular location is the cytoplasm. In terms of biological role, plays a role in lipoprotein-mediated cholesterol uptake in hepatocytes. Binds cholesterol. Binds free fatty acids and their coenzyme A derivatives, bilirubin, and some other small molecules in the cytoplasm. May be involved in intracellular lipid transport. This is Fatty acid-binding protein, liver (Fabp1) from Mus musculus (Mouse).